Here is a 372-residue protein sequence, read N- to C-terminus: Queuine tRNA-ribosyltransferase (372 aa).

The active-site Proton acceptor is the Asp89. Residues 89–93, Asp161, and Gly232 each bind substrate; that span reads DSGGF. Positions 262–268 are RNA binding; that stretch reads GIGDLPS. The Nucleophile role is filled by Asp281. Residues 286-290 form an RNA binding; important for wobble base 34 recognition region; the sequence is TKAAR. Zn(2+) is bound by residues Cys319, Cys321, Cys324, and His351.

It belongs to the queuine tRNA-ribosyltransferase family. As to quaternary structure, homodimer. Within each dimer, one monomer is responsible for RNA recognition and catalysis, while the other monomer binds to the replacement base PreQ1. Zn(2+) serves as cofactor.

The catalysed reaction is 7-aminomethyl-7-carbaguanine + guanosine(34) in tRNA = 7-aminomethyl-7-carbaguanosine(34) in tRNA + guanine. It participates in tRNA modification; tRNA-queuosine biosynthesis. Functionally, catalyzes the base-exchange of a guanine (G) residue with the queuine precursor 7-aminomethyl-7-deazaguanine (PreQ1) at position 34 (anticodon wobble position) in tRNAs with GU(N) anticodons (tRNA-Asp, -Asn, -His and -Tyr). Catalysis occurs through a double-displacement mechanism. The nucleophile active site attacks the C1' of nucleotide 34 to detach the guanine base from the RNA, forming a covalent enzyme-RNA intermediate. The proton acceptor active site deprotonates the incoming PreQ1, allowing a nucleophilic attack on the C1' of the ribose to form the product. After dissociation, two additional enzymatic reactions on the tRNA convert PreQ1 to queuine (Q), resulting in the hypermodified nucleoside queuosine (7-(((4,5-cis-dihydroxy-2-cyclopenten-1-yl)amino)methyl)-7-deazaguanosine). The chain is Queuine tRNA-ribosyltransferase from Chlamydia caviae (strain ATCC VR-813 / DSM 19441 / 03DC25 / GPIC) (Chlamydophila caviae).